Reading from the N-terminus, the 71-residue chain is Vitellogenin-A1 (71 aa).

Residues 1–15 (MRGIILALLLAIAGS) form the signal peptide. Residues 24–71 (FSESKTSVYNYEAVILNGFPESGLSRAGIKINCKVEISAYAQRSYFLK) enclose the Vitellogenin domain.

Produced by the liver, secreted into the blood and then sequestered by receptor mediated endocytosis into growing oocytes, where it is generally cleaved, giving rise to the respective yolk components.

Its function is as follows. Precursor of the major egg-yolk proteins that are sources of nutrients during early development of oviparous organisms. The polypeptide is Vitellogenin-A1 (Xenopus laevis (African clawed frog)).